The following is a 273-amino-acid chain: Nitrogenase iron protein (273 aa).

8-15 (GKGGIGKS) lines the ATP pocket. Position 95 (Cys95) interacts with [4Fe-4S] cluster. Residue Arg98 is modified to ADP-ribosylarginine; by dinitrogenase reductase ADP-ribosyltransferase. Cys130 is a [4Fe-4S] cluster binding site.

The protein belongs to the NifH/BchL/ChlL family. In terms of assembly, homodimer. It depends on [4Fe-4S] cluster as a cofactor. The reversible ADP-ribosylation of Arg-98 inactivates the nitrogenase reductase and regulates nitrogenase activity.

It carries out the reaction N2 + 8 reduced [2Fe-2S]-[ferredoxin] + 16 ATP + 16 H2O = H2 + 8 oxidized [2Fe-2S]-[ferredoxin] + 2 NH4(+) + 16 ADP + 16 phosphate + 6 H(+). Functionally, the key enzymatic reactions in nitrogen fixation are catalyzed by the nitrogenase complex, which has 2 components: the iron protein and the molybdenum-iron protein. The polypeptide is Nitrogenase iron protein (Roseiflexus castenholzii (strain DSM 13941 / HLO8)).